The sequence spans 164 residues: CASP-like protein 1C1 (164 aa).

The Cytoplasmic portion of the chain corresponds to 1–7 (MVKLTKR). A helical membrane pass occupies residues 8–28 (IGGLVLRLAAFGAALAALIVM). At 29-51 (ITSRERASFLAISLEAKYTDMAA) the chain is on the extracellular side. The helical transmembrane segment at 52–72 (FKYFVIANAVVSVYSFLVLFL) threads the bilayer. At 73 to 80 (PKESLLWK) the chain is on the cytoplasmic side. The helical transmembrane segment at 81–101 (FVVVLDLVMTMLLTSSLSAAL) threads the bilayer. At 102–129 (AVAQVGKKGNANAGWLPICGQVPKFCDQ) the chain is on the extracellular side. Residues 130-150 (ITGALIAGFVALVLYVLLLLY) traverse the membrane as a helical segment. At 151–164 (SLHAVVDPFLLQKS) the chain is on the cytoplasmic side.

The protein belongs to the Casparian strip membrane proteins (CASP) family. Homodimer and heterodimers. Expressed in the stele of the root.

The protein localises to the cell membrane. The chain is CASP-like protein 1C1 from Arabidopsis thaliana (Mouse-ear cress).